The sequence spans 302 residues: Bifunctional protein FolD 2 (302 aa).

NADP(+) contacts are provided by residues 170–172, S195, and I236; that span reads GRS.

The protein belongs to the tetrahydrofolate dehydrogenase/cyclohydrolase family. Homodimer.

The enzyme catalyses (6R)-5,10-methylene-5,6,7,8-tetrahydrofolate + NADP(+) = (6R)-5,10-methenyltetrahydrofolate + NADPH. The catalysed reaction is (6R)-5,10-methenyltetrahydrofolate + H2O = (6R)-10-formyltetrahydrofolate + H(+). It functions in the pathway one-carbon metabolism; tetrahydrofolate interconversion. Functionally, catalyzes the oxidation of 5,10-methylenetetrahydrofolate to 5,10-methenyltetrahydrofolate and then the hydrolysis of 5,10-methenyltetrahydrofolate to 10-formyltetrahydrofolate. The protein is Bifunctional protein FolD 2 of Paracoccus denitrificans (strain Pd 1222).